We begin with the raw amino-acid sequence, 630 residues long: Chaperone protein HtpG (630 aa).

An a; substrate-binding region spans residues 1–338 (MTVEANKETL…SNDLSLNVSR (338 aa)). A b region spans residues 339-555 (EILQNDSTVE…QFDMGAQMKK (217 aa)). The interval 556–630 (IMEAAGQKVP…LNRLLLELAN (75 aa)) is c.

This sequence belongs to the heat shock protein 90 family. In terms of assembly, homodimer.

The protein localises to the cytoplasm. Functionally, molecular chaperone. Has ATPase activity. The sequence is that of Chaperone protein HtpG from Marinobacter nauticus (strain ATCC 700491 / DSM 11845 / VT8) (Marinobacter aquaeolei).